The primary structure comprises 244 residues: Tyrosine recombinase XerD-like (244 aa).

Residues 1-73 (MRDRISAFLE…ACNQFLYFLY (73 aa)) enclose the Core-binding (CB) domain. Residues 90 to 244 (AEKKTEKPEI…KTVLTLEKYR (155 aa)) form the Tyr recombinase domain. Residues K150 and R211 contribute to the active site. The O-(3'-phospho-DNA)-tyrosine intermediate role is filled by Y243.

It belongs to the 'phage' integrase family. XerD-like subfamily.

It is found in the cytoplasm. Functionally, putative tyrosine recombinase. Not involved in the cutting and rejoining of the recombining DNA molecules on dif(SL) site. The sequence is that of Tyrosine recombinase XerD-like from Streptococcus pneumoniae serotype 2 (strain D39 / NCTC 7466).